Here is a 165-residue protein sequence, read N- to C-terminus: SsrA-binding protein (165 aa).

The span at 135–158 (QAHDKRQDMARRDAQREVTRELGR) shows a compositional bias: basic and acidic residues. The disordered stretch occupies residues 135–165 (QAHDKRQDMARRDAQREVTRELGRRVKGMTS).

Belongs to the SmpB family.

The protein resides in the cytoplasm. Its function is as follows. Required for rescue of stalled ribosomes mediated by trans-translation. Binds to transfer-messenger RNA (tmRNA), required for stable association of tmRNA with ribosomes. tmRNA and SmpB together mimic tRNA shape, replacing the anticodon stem-loop with SmpB. tmRNA is encoded by the ssrA gene; the 2 termini fold to resemble tRNA(Ala) and it encodes a 'tag peptide', a short internal open reading frame. During trans-translation Ala-aminoacylated tmRNA acts like a tRNA, entering the A-site of stalled ribosomes, displacing the stalled mRNA. The ribosome then switches to translate the ORF on the tmRNA; the nascent peptide is terminated with the 'tag peptide' encoded by the tmRNA and targeted for degradation. The ribosome is freed to recommence translation, which seems to be the essential function of trans-translation. This chain is SsrA-binding protein, found in Mycolicibacterium vanbaalenii (strain DSM 7251 / JCM 13017 / BCRC 16820 / KCTC 9966 / NRRL B-24157 / PYR-1) (Mycobacterium vanbaalenii).